The chain runs to 390 residues: MKKQELNQAFTHVFGREADATFFSPGRINLIGEHTDYNGGRVFPAAITLGTYGAARKRDDKLLRFYSANFEELGIIEISLDHLIFNKKDSWTNYPKGVIKYLQEAGHSIDTGMDVYVFGNIPNGSGLSSSSSLELLIGIMAEELFDLKLDRLDLVKIGKRTENDFIGVNSGIMDQFAIGMGAEKKAIYLDTKTLEYDLVPLDLGDNVIVIMNTNKRRELADSKYNERRTECEKAVEELNVLLDIKSLGELDEETFDEYAYLIKDAKRIKRARHAVSENQRTLKAKKALAAGDLEKFGRLVNASHVSLEHDYEVTGIELDTLAHTAWEQEGVLGARMTGAGFGGCGIAIVAKDKVAALKENVGRIYTETVGYAPAFYIAEIAGGSRVLSRK.

Position 33 to 36 (33 to 36 (EHTD)) interacts with substrate. ATP is bound by residues Ser67 and 124-130 (GSGLSSS). The Mg(2+) site is built by Ser130 and Glu162. Asp174 (proton acceptor) is an active-site residue. Tyr224 contacts substrate.

The protein belongs to the GHMP kinase family. GalK subfamily.

The protein localises to the cytoplasm. The catalysed reaction is alpha-D-galactose + ATP = alpha-D-galactose 1-phosphate + ADP + H(+). It functions in the pathway carbohydrate metabolism; galactose metabolism. Catalyzes the transfer of the gamma-phosphate of ATP to D-galactose to form alpha-D-galactose-1-phosphate (Gal-1-P). The sequence is that of Galactokinase from Streptococcus mutans serotype c (strain ATCC 700610 / UA159).